The sequence spans 429 residues: Trigger factor (429 aa).

In terms of domain architecture, PPIase FKBP-type spans 161–246; the sequence is GDRLSIDFKG…INEVALPKEP (86 aa).

The protein belongs to the FKBP-type PPIase family. Tig subfamily.

Its subcellular location is the cytoplasm. The catalysed reaction is [protein]-peptidylproline (omega=180) = [protein]-peptidylproline (omega=0). Functionally, involved in protein export. Acts as a chaperone by maintaining the newly synthesized protein in an open conformation. Functions as a peptidyl-prolyl cis-trans isomerase. This is Trigger factor from Ruthia magnifica subsp. Calyptogena magnifica.